Consider the following 385-residue polypeptide: MQKSYLGIKLFGSKGNQKLFFEKVDALQKEINNFIFYLVIAGTETSQIQGISAAGIDSKARRRTALADAEFLLFGAYKDHKYKLPFLNSGVTPALISYVCKKLICASQIVVPIGIKEKPYFSHLTVENYLAGPAKCLTTGKSMNKERVLSLYKKGLEIGKSTKQPIFISESVPGGTTTAQAVMEAFGLNVNNLIGSSLINAPRALKTKVIKAGLLKANLKNNFDSLDVISSVGDPFQAFSLGLLIGARLAKQSVVLSGGSQMLAVILLALEFIDSTEKQEFIDLVFIATTGWLVKDNSLGDLLDLITEKHNVNLLGLASPLNFKSSKFKELSDYEIGYVKEGVGAGGMSILAFLKGFSNEEIVSSCQVNLERMKDLGQISINKDC.

Belongs to the UPF0284 family.

In Prochlorococcus marinus subsp. pastoris (strain CCMP1986 / NIES-2087 / MED4), this protein is UPF0284 protein PMM0439.